The sequence spans 231 residues: MQKFDSLFRSQNIFFIAIVIFILSSVILYHNRSDILKLFTTEYKGLNQITNQEKENKENAILDEKEYETLLSTKSLLNYVNSLKSSKTSIPDSEAIIHESVEVTDNIVEVPIRYTHYLLNVNLLVYNFIQDKDYSKELRILKSYPLPQNIRNILNNLEKYNNNYLVSKSNSTVVIFPIHHKWLEQLIKIEKKSPVMIVKEQDKTLILEKLNYLIYFLYSEKFMQEFVNKDV.

A helical membrane pass occupies residues 10–30; that stretch reads SQNIFFIAIVIFILSSVILYH.

It localises to the membrane. This is an uncharacterized protein from Rickettsia prowazekii (strain Madrid E).